A 277-amino-acid polypeptide reads, in one-letter code: Release factor glutamine methyltransferase (277 aa).

S-adenosyl-L-methionine contacts are provided by residues 119-123 (GTGTG), Asp142, and Asn184. 184–187 (NPPY) serves as a coordination point for substrate.

The protein belongs to the protein N5-glutamine methyltransferase family. PrmC subfamily.

The catalysed reaction is L-glutaminyl-[peptide chain release factor] + S-adenosyl-L-methionine = N(5)-methyl-L-glutaminyl-[peptide chain release factor] + S-adenosyl-L-homocysteine + H(+). Its function is as follows. Methylates the class 1 translation termination release factors RF1/PrfA and RF2/PrfB on the glutamine residue of the universally conserved GGQ motif. This is Release factor glutamine methyltransferase from Enterococcus faecalis (strain ATCC 700802 / V583).